The sequence spans 166 residues: Endoribonuclease YbeY (166 aa).

Residues histidine 111, histidine 115, and histidine 121 each coordinate Zn(2+). Residues 141 to 166 (LGYPDPYADDESADHPHSDTPSKDHE) form a disordered region. Residues 153–166 (ADHPHSDTPSKDHE) show a composition bias toward basic and acidic residues.

It belongs to the endoribonuclease YbeY family. Zn(2+) serves as cofactor.

It localises to the cytoplasm. Single strand-specific metallo-endoribonuclease involved in late-stage 70S ribosome quality control and in maturation of the 3' terminus of the 16S rRNA. The polypeptide is Endoribonuclease YbeY (Pseudomonas syringae pv. tomato (strain ATCC BAA-871 / DC3000)).